Reading from the N-terminus, the 213-residue chain is Deoxyribose-phosphate aldolase (213 aa).

Asp89 functions as the Proton donor/acceptor in the catalytic mechanism. The active-site Schiff-base intermediate with acetaldehyde is Lys151. The active-site Proton donor/acceptor is the Lys180.

It belongs to the DeoC/FbaB aldolase family. DeoC type 1 subfamily.

The protein resides in the cytoplasm. It carries out the reaction 2-deoxy-D-ribose 5-phosphate = D-glyceraldehyde 3-phosphate + acetaldehyde. It participates in carbohydrate degradation; 2-deoxy-D-ribose 1-phosphate degradation; D-glyceraldehyde 3-phosphate and acetaldehyde from 2-deoxy-alpha-D-ribose 1-phosphate: step 2/2. Catalyzes a reversible aldol reaction between acetaldehyde and D-glyceraldehyde 3-phosphate to generate 2-deoxy-D-ribose 5-phosphate. The protein is Deoxyribose-phosphate aldolase of Finegoldia magna (strain ATCC 29328 / DSM 20472 / WAL 2508) (Peptostreptococcus magnus).